The sequence spans 154 residues: 3-hydroxyacyl-[acyl-carrier-protein] dehydratase FabZ (154 aa).

The active site involves His-60.

The protein belongs to the thioester dehydratase family. FabZ subfamily.

It is found in the cytoplasm. The catalysed reaction is a (3R)-hydroxyacyl-[ACP] = a (2E)-enoyl-[ACP] + H2O. Involved in unsaturated fatty acids biosynthesis. Catalyzes the dehydration of short chain beta-hydroxyacyl-ACPs and long chain saturated and unsaturated beta-hydroxyacyl-ACPs. In Haemophilus ducreyi (strain 35000HP / ATCC 700724), this protein is 3-hydroxyacyl-[acyl-carrier-protein] dehydratase FabZ.